Consider the following 427-residue polypeptide: UDP-N-acetylglucosamine 1-carboxyvinyltransferase 1 (427 aa).

24 to 25 (KN) is a binding site for phosphoenolpyruvate. Arginine 97 lines the UDP-N-acetyl-alpha-D-glucosamine pocket. Cysteine 121 (proton donor) is an active-site residue. Position 121 is a 2-(S-cysteinyl)pyruvic acid O-phosphothioketal (cysteine 121). UDP-N-acetyl-alpha-D-glucosamine-binding positions include 126-130 (RPIDL), aspartate 309, and valine 331.

The protein belongs to the EPSP synthase family. MurA subfamily.

It localises to the cytoplasm. It carries out the reaction phosphoenolpyruvate + UDP-N-acetyl-alpha-D-glucosamine = UDP-N-acetyl-3-O-(1-carboxyvinyl)-alpha-D-glucosamine + phosphate. The protein operates within cell wall biogenesis; peptidoglycan biosynthesis. Functionally, cell wall formation. Adds enolpyruvyl to UDP-N-acetylglucosamine. The polypeptide is UDP-N-acetylglucosamine 1-carboxyvinyltransferase 1 (Lactococcus lactis subsp. lactis (strain IL1403) (Streptococcus lactis)).